We begin with the raw amino-acid sequence, 226 residues long: ATP-dependent dethiobiotin synthetase BioD (226 aa).

12 to 17 (DAGKTV) contacts ATP. Position 16 (Thr16) interacts with Mg(2+). The active site involves Lys39. Ser43 serves as a coordination point for substrate. ATP contacts are provided by residues Asp47, 108–111 (EGVG), 168–169 (NC), 200–202 (PYL), and Asn207. Mg(2+)-binding residues include Asp47 and Glu108.

It belongs to the dethiobiotin synthetase family. In terms of assembly, homodimer. Mg(2+) is required as a cofactor.

It localises to the cytoplasm. The enzyme catalyses (7R,8S)-7,8-diammoniononanoate + CO2 + ATP = (4R,5S)-dethiobiotin + ADP + phosphate + 3 H(+). It catalyses the reaction (7R,8S)-8-amino-7-(carboxyamino)nonanoate + ATP = (4R,5S)-dethiobiotin + ADP + phosphate + H(+). The protein operates within cofactor biosynthesis; biotin biosynthesis; biotin from 7,8-diaminononanoate: step 1/2. Its function is as follows. Catalyzes a mechanistically unusual reaction, the ATP-dependent insertion of CO2 between the N7 and N8 nitrogen atoms of 7,8-diaminopelargonic acid (DAPA, also called 7,8-diammoniononanoate) to form a ureido ring. This cyanobacterium does not encode bioA (which catalyzes the formation of the precursor for this reaction in the cannonical pathway), instead it encodes bioU, which replaces bioA and also performs the first half of the cannonical BioD reaction. Thus in this organism BioD has a different substrate. This is ATP-dependent dethiobiotin synthetase BioD from Cyanothece sp. (strain PCC 7425 / ATCC 29141).